Here is an 882-residue protein sequence, read N- to C-terminus: Valine--tRNA ligase (882 aa).

A 'HIGH' region motif is present at residues 48 to 58 (PNVTGKLHLGH). A 'KMSKS' region motif is present at residues 524–528 (KMSKS). Lys527 contacts ATP. The stretch at 809–882 (LAELLDLDEE…KRLAELKAAR (74 aa)) forms a coiled coil. The tract at residues 844–866 (GFTDRAPEKVVQEERDKQADYEQ) is disordered. The span at 845-863 (FTDRAPEKVVQEERDKQAD) shows a compositional bias: basic and acidic residues.

Belongs to the class-I aminoacyl-tRNA synthetase family. ValS type 1 subfamily. Monomer.

The protein localises to the cytoplasm. It catalyses the reaction tRNA(Val) + L-valine + ATP = L-valyl-tRNA(Val) + AMP + diphosphate. In terms of biological role, catalyzes the attachment of valine to tRNA(Val). As ValRS can inadvertently accommodate and process structurally similar amino acids such as threonine, to avoid such errors, it has a 'posttransfer' editing activity that hydrolyzes mischarged Thr-tRNA(Val) in a tRNA-dependent manner. This Latilactobacillus sakei subsp. sakei (strain 23K) (Lactobacillus sakei subsp. sakei) protein is Valine--tRNA ligase.